The sequence spans 197 residues: Endo-1,4-beta-xylanase A (197 aa).

The region spanning S1–T197 is the GH11 domain. The active-site Nucleophile is E87. An intrachain disulfide couples C111 to C160. Catalysis depends on E184, which acts as the Proton donor.

The protein belongs to the glycosyl hydrolase 11 (cellulase G) family.

The protein resides in the secreted. It carries out the reaction Endohydrolysis of (1-&gt;4)-beta-D-xylosidic linkages in xylans.. Its pathway is glycan degradation; xylan degradation. Its function is as follows. Hydrolyzes xylans into xylobiose and xylose. The chain is Endo-1,4-beta-xylanase A (XYNA) from Schizophyllum commune (Split gill fungus).